Consider the following 602-residue polypeptide: CDPK-related protein kinase (602 aa).

The disordered stretch occupies residues 1–59 (MGICVSKPSPEPDLHNHHTSIPVNDTSLPPQDNSIPPKDIAIPAQDNNKPPGKKSPFLP). Over residues 19 to 34 (TSIPVNDTSLPPQDNS) the composition is skewed to polar residues. 3 tandem repeats follow at residues 20-26 (SIPVNDT), 27-33 (SLPPQDN), and 34-40 (SIPPKDI). Residues 20-40 (SIPVNDTSLPPQDNSIPPKDI) are 3 X 7 AA tandem repeats of S-[LI]-P-X-X-D-X. In terms of domain architecture, Protein kinase spans 148-410 (FEVGEEVGRG…AAQALCHSWI (263 aa)). Residues 154–162 (VGRGHFGYT) and Lys180 each bind ATP. Catalysis depends on Asp276, which acts as the Proton acceptor. 4 EF-hand domains span residues 451 to 486 (VDEL…RNST), 487 to 527 (DAMK…LEAL), 528 to 563 (DRWE…LGPS), and 564 to 602 (IPVH…AKAQ).

This sequence belongs to the protein kinase superfamily. CAMK Ser/Thr protein kinase family. CaMK subfamily.

The catalysed reaction is L-seryl-[protein] + ATP = O-phospho-L-seryl-[protein] + ADP + H(+). It carries out the reaction L-threonyl-[protein] + ATP = O-phospho-L-threonyl-[protein] + ADP + H(+). In Daucus carota (Wild carrot), this protein is CDPK-related protein kinase (CRK).